The following is a 77-amino-acid chain: DNA-directed RNA polymerase subunit omega (77 aa).

The protein belongs to the RNA polymerase subunit omega family. The RNAP catalytic core consists of 2 alpha, 1 beta, 1 beta' and 1 omega subunit. When a sigma factor is associated with the core the holoenzyme is formed, which can initiate transcription.

It catalyses the reaction RNA(n) + a ribonucleoside 5'-triphosphate = RNA(n+1) + diphosphate. Promotes RNA polymerase assembly. Latches the N- and C-terminal regions of the beta' subunit thereby facilitating its interaction with the beta and alpha subunits. This is DNA-directed RNA polymerase subunit omega from Nitratidesulfovibrio vulgaris (strain ATCC 29579 / DSM 644 / CCUG 34227 / NCIMB 8303 / VKM B-1760 / Hildenborough) (Desulfovibrio vulgaris).